We begin with the raw amino-acid sequence, 376 residues long: Ribonuclease D (376 aa).

Residues 8 to 176 (IQWIRDDASL…VYLALDARLS (169 aa)) form the 3'-5' exonuclease domain. The region spanning 214 to 294 (RPQQLAVLRE…AEAARLPQSE (81 aa)) is the HRDC domain.

It belongs to the RNase D family. The cofactor is a divalent metal cation.

The protein localises to the cytoplasm. The enzyme catalyses Exonucleolytic cleavage that removes extra residues from the 3'-terminus of tRNA to produce 5'-mononucleotides.. Its function is as follows. Exonuclease involved in the 3' processing of various precursor tRNAs. Initiates hydrolysis at the 3'-terminus of an RNA molecule and releases 5'-mononucleotides. In Pseudomonas paraeruginosa (strain DSM 24068 / PA7) (Pseudomonas aeruginosa (strain PA7)), this protein is Ribonuclease D.